The chain runs to 252 residues: MITKRIIPCLDVKDGRVVKGVQFVSLRDAGDPVELARAYDEQGADELVFLDISASHEGRKTMVDVVRRVAAQLAIPFTVGGGISTLEDMKTILRAGADKVSVNTAALLRPELITEGANFFGSQCIVVAIDAKYDETMQSWRVYTHGGRRPTDWEVVAWAKEAVKRGAGEILLTSMDRDGGKDGFDLALTKRVSEAVSVPVIASGGAGCAQHFVDVFQTAQADAALAASIFHYQETSVQQVKQYVREQGVNVR.

Active-site residues include Asp11 and Asp130.

Belongs to the HisA/HisF family. Heterodimer of HisH and HisF.

It is found in the cytoplasm. The catalysed reaction is 5-[(5-phospho-1-deoxy-D-ribulos-1-ylimino)methylamino]-1-(5-phospho-beta-D-ribosyl)imidazole-4-carboxamide + L-glutamine = D-erythro-1-(imidazol-4-yl)glycerol 3-phosphate + 5-amino-1-(5-phospho-beta-D-ribosyl)imidazole-4-carboxamide + L-glutamate + H(+). It participates in amino-acid biosynthesis; L-histidine biosynthesis; L-histidine from 5-phospho-alpha-D-ribose 1-diphosphate: step 5/9. Functionally, IGPS catalyzes the conversion of PRFAR and glutamine to IGP, AICAR and glutamate. The HisF subunit catalyzes the cyclization activity that produces IGP and AICAR from PRFAR using the ammonia provided by the HisH subunit. The polypeptide is Imidazole glycerol phosphate synthase subunit HisF (Anoxybacillus flavithermus (strain DSM 21510 / WK1)).